Here is a 335-residue protein sequence, read N- to C-terminus: Olfactory receptor 52B6 (335 aa).

The Extracellular portion of the chain corresponds to Met1–Ile45. N-linked (GlcNAc...) asparagine glycosylation occurs at Asn23. A helical transmembrane segment spans residues Trp46–Ile66. Topologically, residues Cys67 to Ile74 are cytoplasmic. A helical membrane pass occupies residues Leu75–Thr95. The Extracellular segment spans residues Thr96–Thr119. Cys117 and Cys208 are oxidised to a cystine. The helical transmembrane segment at Gln120 to Phe139 threads the bilayer. Residues Asp140 to Lys158 lie on the Cytoplasmic side of the membrane. The chain crosses the membrane as a helical span at residues Val159–Ile179. Over Phe180–Val215 the chain is Extracellular. The helical transmembrane segment at Trp216–Ser236 threads the bilayer. At Tyr237–Ala256 the chain is on the cytoplasmic side. The chain crosses the membrane as a helical span at residues Leu257–Ser277. The Extracellular portion of the chain corresponds to Val278–His293. The chain crosses the membrane as a helical span at residues Ile294–Val314. The Cytoplasmic portion of the chain corresponds to Arg315 to Lys335.

Belongs to the G-protein coupled receptor 1 family.

It localises to the cell membrane. Functionally, odorant receptor. The protein is Olfactory receptor 52B6 (OR52B6) of Homo sapiens (Human).